The sequence spans 148 residues: Probable transcriptional regulator SyrB (148 aa).

Positions 1–58 (MADESNTGPVAAAEAVAETQAPAGKRKSSSRRQRTAAGQVAESKTTAKPKRYSETERA) are disordered. Over residues 7–23 (TGPVAAAEAVAETQAPA) the composition is skewed to low complexity. The span at 24–34 (GKRKSSSRRQR) shows a compositional bias: basic residues.

The protein belongs to the SyrB family.

In terms of biological role, responsible for the repression of SyrM activity. The sequence is that of Probable transcriptional regulator SyrB (syrB) from Sinorhizobium fredii (strain NBRC 101917 / NGR234).